Here is a 393-residue protein sequence, read N- to C-terminus: Na(+)/H(+) antiporter NhaA (393 aa).

A run of 11 helical transmembrane segments spans residues 24–44, 58–78, 96–116, 126–146, 155–175, 178–198, 214–234, 267–287, 300–320, 338–358, and 369–389; these read GGLV…SPLA, LSLL…LVGL, ILPG…YILF, GWAI…SLFG, IFLA…IALF, SDLN…LYGM, AVLW…GVLL, VAFI…FSGV, VAAG…FLLV, GVAA…LLAF, and MGIL…LATF.

It belongs to the NhaA Na(+)/H(+) (TC 2.A.33) antiporter family.

It is found in the cell inner membrane. The catalysed reaction is Na(+)(in) + 2 H(+)(out) = Na(+)(out) + 2 H(+)(in). In terms of biological role, na(+)/H(+) antiporter that extrudes sodium in exchange for external protons. The protein is Na(+)/H(+) antiporter NhaA of Rhizobium etli (strain ATCC 51251 / DSM 11541 / JCM 21823 / NBRC 15573 / CFN 42).